A 210-amino-acid polypeptide reads, in one-letter code: Ribonuclease HII (210 aa).

In terms of domain architecture, RNase H type-2 spans 18–210; sequence GLIAGVDEVG…FKPVKALLGL (193 aa). 3 residues coordinate a divalent metal cation: D24, E25, and D116.

This sequence belongs to the RNase HII family. The cofactor is Mn(2+). Mg(2+) is required as a cofactor.

It localises to the cytoplasm. It catalyses the reaction Endonucleolytic cleavage to 5'-phosphomonoester.. Endonuclease that specifically degrades the RNA of RNA-DNA hybrids. The polypeptide is Ribonuclease HII (Shewanella baltica (strain OS155 / ATCC BAA-1091)).